We begin with the raw amino-acid sequence, 101 residues long: NAD(P)H-quinone oxidoreductase subunit 4L, chloroplastic (101 aa).

3 consecutive transmembrane segments (helical) span residues 2 to 22 (MLEH…FGLI), 32 to 52 (MCLE…SHLF), and 61 to 81 (IFSI…LAIV).

Belongs to the complex I subunit 4L family. NDH is composed of at least 16 different subunits, 5 of which are encoded in the nucleus.

It localises to the plastid. It is found in the chloroplast thylakoid membrane. The enzyme catalyses a plastoquinone + NADH + (n+1) H(+)(in) = a plastoquinol + NAD(+) + n H(+)(out). It carries out the reaction a plastoquinone + NADPH + (n+1) H(+)(in) = a plastoquinol + NADP(+) + n H(+)(out). Its function is as follows. NDH shuttles electrons from NAD(P)H:plastoquinone, via FMN and iron-sulfur (Fe-S) centers, to quinones in the photosynthetic chain and possibly in a chloroplast respiratory chain. The immediate electron acceptor for the enzyme in this species is believed to be plastoquinone. Couples the redox reaction to proton translocation, and thus conserves the redox energy in a proton gradient. This is NAD(P)H-quinone oxidoreductase subunit 4L, chloroplastic from Piper cenocladum (Ant piper).